The chain runs to 150 residues: Macrodomain Ter protein (150 aa).

The protein belongs to the MatP family. In terms of assembly, homodimer.

It localises to the cytoplasm. Its function is as follows. Required for spatial organization of the terminus region of the chromosome (Ter macrodomain) during the cell cycle. Prevents early segregation of duplicated Ter macrodomains during cell division. Binds specifically to matS, which is a 13 bp signature motif repeated within the Ter macrodomain. In Shigella dysenteriae serotype 1 (strain Sd197), this protein is Macrodomain Ter protein.